A 486-amino-acid chain; its full sequence is Hexokinase-2 (486 aa).

Ser15 carries the phosphoserine modification. Positions 21–469 constitute a Hexokinase domain; the sequence is KELMQQIENF…SGAGAAVIAA (449 aa). A Phosphothreonine modification is found at Thr38. The hexokinase small subdomain stretch occupies residues 75 to 209; it reads TGKESGDFLA…NIPIEVVALI (135 aa). ATP contacts are provided by residues 86–91 and Lys111; that span reads DLGGTN. At Ser158 the chain carries Phosphoserine. Residues Ser158, 175-176, 210-211, and Asn237 contribute to the substrate site; these read TK and ND. The hexokinase large subdomain stretch occupies residues 210-458; sequence NDTTGTLVAS…YPIKIVPAED (249 aa). At Ser245 the chain carries Phosphoserine. Glu269 provides a ligand contact to substrate. Ser272 carries the phosphoserine modification. Glu302 is a binding site for substrate. ATP contacts are provided by residues 307-308, 344-348, and 419-423; these read GY, TSYPA, and SVYNR.

It belongs to the hexokinase family. In terms of assembly, homodimer.

The catalysed reaction is a D-hexose + ATP = a D-hexose 6-phosphate + ADP + H(+). It catalyses the reaction D-fructose + ATP = D-fructose 6-phosphate + ADP + H(+). It carries out the reaction D-glucose + ATP = D-glucose 6-phosphate + ADP + H(+). The protein operates within carbohydrate metabolism; hexose metabolism. Its pathway is carbohydrate degradation; glycolysis; D-glyceraldehyde 3-phosphate and glycerone phosphate from D-glucose: step 1/4. Its activity is regulated as follows. Subject to allosteric control. Substrate inhibition by ATP. Its function is as follows. Catalyzes the phosphorylation of hexose, such as D-glucose and D-fructose, to hexose 6-phosphate (D-glucose 6-phosphate and D-fructose 6-phosphate, respectively). Mediates the initial step of glycolysis by catalyzing phosphorylation of D-glucose to D-glucose 6-phosphate. The protein is Hexokinase-2 (HXK2) of Saccharomyces cerevisiae (strain ATCC 204508 / S288c) (Baker's yeast).